A 427-amino-acid chain; its full sequence is Glutamate-1-semialdehyde 2,1-aminomutase (427 aa).

Lysine 265 bears the N6-(pyridoxal phosphate)lysine mark.

It belongs to the class-III pyridoxal-phosphate-dependent aminotransferase family. HemL subfamily. As to quaternary structure, homodimer. Pyridoxal 5'-phosphate is required as a cofactor.

The protein resides in the cytoplasm. The catalysed reaction is (S)-4-amino-5-oxopentanoate = 5-aminolevulinate. The protein operates within porphyrin-containing compound metabolism; protoporphyrin-IX biosynthesis; 5-aminolevulinate from L-glutamyl-tRNA(Glu): step 2/2. This is Glutamate-1-semialdehyde 2,1-aminomutase from Actinobacillus succinogenes (strain ATCC 55618 / DSM 22257 / CCUG 43843 / 130Z).